The chain runs to 650 residues: DNA ligase (650 aa).

NAD(+) contacts are provided by residues 30 to 34 (DEQYD) and 79 to 80 (SL). Residue lysine 110 is the N6-AMP-lysine intermediate of the active site. Residues arginine 131, glutamate 165, and lysine 304 each contribute to the NAD(+) site. Residues cysteine 398, cysteine 401, cysteine 414, and cysteine 419 each coordinate Zn(2+). The 78-residue stretch at 573–650 (DNNNVFFNKT…EEEFLAQINK (78 aa)) folds into the BRCT domain.

The protein belongs to the NAD-dependent DNA ligase family. LigA subfamily. The cofactor is Mg(2+). Requires Mn(2+) as cofactor.

It carries out the reaction NAD(+) + (deoxyribonucleotide)n-3'-hydroxyl + 5'-phospho-(deoxyribonucleotide)m = (deoxyribonucleotide)n+m + AMP + beta-nicotinamide D-nucleotide.. Functionally, DNA ligase that catalyzes the formation of phosphodiester linkages between 5'-phosphoryl and 3'-hydroxyl groups in double-stranded DNA using NAD as a coenzyme and as the energy source for the reaction. It is essential for DNA replication and repair of damaged DNA. The sequence is that of DNA ligase from Helicobacter hepaticus (strain ATCC 51449 / 3B1).